The following is a 397-amino-acid chain: CCA-adding enzyme (397 aa).

Positions 26 and 29 each coordinate ATP. The CTP site is built by Gly-26 and Arg-29. Mg(2+) is bound by residues Asp-39 and Asp-41. Positions 110, 153, 156, 159, and 162 each coordinate ATP. 5 residues coordinate CTP: Arg-110, Asp-153, Arg-156, Arg-159, and Arg-162.

This sequence belongs to the tRNA nucleotidyltransferase/poly(A) polymerase family. Bacterial CCA-adding enzyme type 3 subfamily. As to quaternary structure, homodimer. Mg(2+) serves as cofactor.

The enzyme catalyses a tRNA precursor + 2 CTP + ATP = a tRNA with a 3' CCA end + 3 diphosphate. It catalyses the reaction a tRNA with a 3' CCA end + 2 CTP + ATP = a tRNA with a 3' CCACCA end + 3 diphosphate. Its function is as follows. Catalyzes the addition and repair of the essential 3'-terminal CCA sequence in tRNAs without using a nucleic acid template. Adds these three nucleotides in the order of C, C, and A to the tRNA nucleotide-73, using CTP and ATP as substrates and producing inorganic pyrophosphate. tRNA 3'-terminal CCA addition is required both for tRNA processing and repair. Also involved in tRNA surveillance by mediating tandem CCA addition to generate a CCACCA at the 3' terminus of unstable tRNAs. While stable tRNAs receive only 3'-terminal CCA, unstable tRNAs are marked with CCACCA and rapidly degraded. The protein is CCA-adding enzyme of Bacillus cereus (strain G9842).